The chain runs to 158 residues: uncharacterized protein (158 aa).

The HTH asnC-type domain maps to 12–73 (LDEIDRAILR…LINPFKAGYE (62 aa)). The H-T-H motif DNA-binding region spans 31-50 (YSEISRRINVPESTVRARVN).

This is an uncharacterized protein from Pyrococcus horikoshii (strain ATCC 700860 / DSM 12428 / JCM 9974 / NBRC 100139 / OT-3).